Consider the following 199-residue polypeptide: ATP-dependent Clp protease proteolytic subunit 2 (199 aa).

The active-site Nucleophile is S98. Residue H123 is part of the active site.

The protein belongs to the peptidase S14 family. As to quaternary structure, fourteen ClpP subunits assemble into 2 heptameric rings which stack back to back to give a disk-like structure with a central cavity, resembling the structure of eukaryotic proteasomes.

The protein resides in the cytoplasm. It catalyses the reaction Hydrolysis of proteins to small peptides in the presence of ATP and magnesium. alpha-casein is the usual test substrate. In the absence of ATP, only oligopeptides shorter than five residues are hydrolyzed (such as succinyl-Leu-Tyr-|-NHMec, and Leu-Tyr-Leu-|-Tyr-Trp, in which cleavage of the -Tyr-|-Leu- and -Tyr-|-Trp bonds also occurs).. Cleaves peptides in various proteins in a process that requires ATP hydrolysis. Has a chymotrypsin-like activity. Plays a major role in the degradation of misfolded proteins. The sequence is that of ATP-dependent Clp protease proteolytic subunit 2 from Corynebacterium diphtheriae (strain ATCC 700971 / NCTC 13129 / Biotype gravis).